A 252-amino-acid polypeptide reads, in one-letter code: Probable phosphatase Shewmr4_2619 (252 aa).

His8, His10, His16, His41, Glu74, His102, His132, Asp193, and His195 together coordinate Zn(2+).

Belongs to the PHP family. Zn(2+) serves as cofactor.

The polypeptide is Probable phosphatase Shewmr4_2619 (Shewanella sp. (strain MR-4)).